The sequence spans 221 residues: Flavin-dependent thymidylate synthase (221 aa).

A ThyX domain is found at 9–209; it reads GFVKLLDHMG…PWTYESFIRY (201 aa). Residues S55, 78–80, and E86 each bind FAD; that span reads RHR. DUMP contacts are provided by residues 75–78, 86–90, and R148; these read QWMR and ELSGR. Positions 78–88 match the ThyX motif motif; that stretch reads RHRIASYNELS. FAD is bound by residues 164-166 and N170; that span reads NAR. R175 serves as a coordination point for dUMP. R175 serves as the catalytic Involved in ionization of N3 of dUMP, leading to its activation.

It belongs to the thymidylate synthase ThyX family. As to quaternary structure, homotetramer. FAD serves as cofactor.

The catalysed reaction is dUMP + (6R)-5,10-methylene-5,6,7,8-tetrahydrofolate + NADPH + H(+) = dTMP + (6S)-5,6,7,8-tetrahydrofolate + NADP(+). Its pathway is pyrimidine metabolism; dTTP biosynthesis. In terms of biological role, catalyzes the reductive methylation of 2'-deoxyuridine-5'-monophosphate (dUMP) to 2'-deoxythymidine-5'-monophosphate (dTMP) while utilizing 5,10-methylenetetrahydrofolate (mTHF) as the methyl donor, and NADPH and FADH(2) as the reductant. In Pseudothermotoga lettingae (strain ATCC BAA-301 / DSM 14385 / NBRC 107922 / TMO) (Thermotoga lettingae), this protein is Flavin-dependent thymidylate synthase.